We begin with the raw amino-acid sequence, 349 residues long: 1-acylglycerol-3-phosphate O-acyltransferase ABHD5 (349 aa).

Ala-2 carries the N-acetylalanine modification. An AB hydrolase-1 domain is found at 77–185 (PLVLLHGFGG…VEPWGFPERP (109 aa)). An HXXXXD motif motif is present at residues 327–332 (HYVYAD).

This sequence belongs to the peptidase S33 family. ABHD4/ABHD5 subfamily. Interacts with ADRP, PLIN and PNPLA2. Interacts with PLIN5; promotes interaction with PNPLA2.

Its subcellular location is the cytoplasm. It localises to the lipid droplet. It catalyses the reaction a 1-acyl-sn-glycero-3-phosphate + an acyl-CoA = a 1,2-diacyl-sn-glycero-3-phosphate + CoA. It carries out the reaction 1-(9Z-octadecenoyl)-sn-glycero-3-phosphate + (9Z)-octadecenoyl-CoA = 1,2-di-(9Z-octadecenoyl)-sn-glycero-3-phosphate + CoA. The enzyme catalyses 1-(9Z-octadecenoyl)-sn-glycero-3-phosphate + hexadecanoyl-CoA = 1-(9Z)-octadecenoyl-2-hexadecanoyl-sn-glycero-3-phosphate + CoA. The catalysed reaction is 1-(9Z-octadecenoyl)-sn-glycero-3-phosphate + octadecanoyl-CoA = 1-(9Z-octadecenoyl)-2-octadecanoyl-sn-glycero-3-phosphate + CoA. It catalyses the reaction 1-(9Z-octadecenoyl)-sn-glycero-3-phosphate + (5Z,8Z,11Z,14Z)-eicosatetraenoyl-CoA = 1-(9Z)-octadecenoyl-2-(5Z,8Z,11Z,14Z)-eicosatetraenoyl-sn-glycero-3-phosphate + CoA. It carries out the reaction eicosanoyl-CoA + 1-(9Z-octadecenoyl)-sn-glycero-3-phosphate = 1-(9Z)-octadecenoyl-2-eicosanoyl-sn-glycero-3-phosphate + CoA. The enzyme catalyses 1-hexadecanoyl-sn-glycero-3-phosphate + (9Z)-octadecenoyl-CoA = 1-hexadecanoyl-2-(9Z-octadecenoyl)-sn-glycero-3-phosphate + CoA. The catalysed reaction is 1-octadecanoyl-sn-glycero-3-phosphate + (9Z)-octadecenoyl-CoA = 1-octadecanoyl-2-(9Z-octadecenoyl)-sn-glycero-3-phosphate + CoA. It catalyses the reaction 1-(5Z,8Z,11Z,14Z-eicosatetraenoyl)-sn-glycero-3-phosphate + (9Z)-octadecenoyl-CoA = 1-(5Z,8Z,11Z,14Z)-eicosatetraenoyl-2-(9Z)-octadecenoyl-sn-glycero-3-phosphate + CoA. Acyltransferase activity is inhibited by detergents such as Triton X-100 and 3-[(3-cholamidopropyl)dimethylammonio]-1-propanesulfonate (CHAPS). Acyltransferase activity is inhibited by the presence of magnesium and calcium. Its function is as follows. Coenzyme A-dependent lysophosphatidic acid acyltransferase that catalyzes the transfer of an acyl group on a lysophosphatidic acid. Functions preferentially with 1-oleoyl-lysophosphatidic acid followed by 1-palmitoyl-lysophosphatidic acid, 1-stearoyl-lysophosphatidic acid and 1-arachidonoyl-lysophosphatidic acid as lipid acceptor. Functions preferentially with arachidonoyl-CoA followed by oleoyl-CoA as acyl group donors. Functions in phosphatidic acid biosynthesis. May regulate the cellular storage of triacylglycerol through activation of the phospholipase PNPLA2. Involved in keratinocyte differentiation. Regulates lipid droplet fusion. The sequence is that of 1-acylglycerol-3-phosphate O-acyltransferase ABHD5 from Sus scrofa (Pig).